A 444-amino-acid chain; its full sequence is uncharacterized protein (444 aa).

Lys-268 is modified (N6-(pyridoxal phosphate)lysine).

This sequence belongs to the class-III pyridoxal-phosphate-dependent aminotransferase family. It depends on pyridoxal 5'-phosphate as a cofactor.

This is an uncharacterized protein from Bacillus subtilis (strain 168).